The chain runs to 429 residues: Glutamate-1-semialdehyde 2,1-aminomutase (429 aa).

Lys264 is modified (N6-(pyridoxal phosphate)lysine).

It belongs to the class-III pyridoxal-phosphate-dependent aminotransferase family. HemL subfamily. As to quaternary structure, homodimer. Pyridoxal 5'-phosphate is required as a cofactor.

Its subcellular location is the cytoplasm. The enzyme catalyses (S)-4-amino-5-oxopentanoate = 5-aminolevulinate. It participates in porphyrin-containing compound metabolism; protoporphyrin-IX biosynthesis; 5-aminolevulinate from L-glutamyl-tRNA(Glu): step 2/2. The polypeptide is Glutamate-1-semialdehyde 2,1-aminomutase (Campylobacter curvus (strain 525.92)).